Here is a 174-residue protein sequence, read N- to C-terminus: Shikimate kinase 2 (174 aa).

12 to 17 provides a ligand contact to ATP; sequence GAGKTT. Mg(2+) contacts are provided by T16 and D32. Substrate is bound by residues D34, R58, and G79. Residues 112–126 form an LID domain region; that stretch reads AEDPEDAQRPSLTGK. Residue R120 participates in ATP binding. R139 lines the substrate pocket. Q155 contributes to the ATP binding site.

This sequence belongs to the shikimate kinase family. AroL subfamily. Monomer. Mg(2+) serves as cofactor.

Its subcellular location is the cytoplasm. The catalysed reaction is shikimate + ATP = 3-phosphoshikimate + ADP + H(+). Its pathway is metabolic intermediate biosynthesis; chorismate biosynthesis; chorismate from D-erythrose 4-phosphate and phosphoenolpyruvate: step 5/7. In terms of biological role, catalyzes the specific phosphorylation of the 3-hydroxyl group of shikimic acid using ATP as a cosubstrate. The chain is Shikimate kinase 2 from Yersinia enterocolitica serotype O:8 / biotype 1B (strain NCTC 13174 / 8081).